The sequence spans 718 residues: Quinolinate synthase, chloroplastic (718 aa).

The segment covering methionine 1–proline 22 has biased composition (low complexity). A disordered region spans residues methionine 1–arginine 29. The N-terminal 70 residues, methionine 1–alanine 70, are a transit peptide targeting the chloroplast. Cysteine 132 (cysteine persulfide intermediate) is an active-site residue. Iminosuccinate contacts are provided by histidine 280 and serine 306. Cysteine 360 lines the [4Fe-4S] cluster pocket. Iminosuccinate-binding positions include tyrosine 389–asparagine 391 and serine 411. Cysteine 484 lines the [4Fe-4S] cluster pocket. Iminosuccinate is bound by residues histidine 510 to glutamate 512 and threonine 535. Cysteine 640 lines the [4Fe-4S] cluster pocket.

This sequence belongs to the quinolinate synthase family. Type 1 subfamily. In terms of assembly, homodimer. Interacts in vitro with NFS2, CpNIFS3 and AO. Part of a Cys defulfurase complex. It depends on [4Fe-4S] cluster as a cofactor. In terms of tissue distribution, expressed in roots, leaves, stems and flowers.

Its subcellular location is the plastid. It localises to the chloroplast. The catalysed reaction is iminosuccinate + dihydroxyacetone phosphate = quinolinate + phosphate + 2 H2O + H(+). It participates in cofactor biosynthesis; NAD(+) biosynthesis; quinolinate from iminoaspartate: step 1/1. Functionally, catalyzes the condensation of iminoaspartate with dihydroxyacetone phosphate to form quinolinate. Can complement nadA-deficient E.coli mutant. Essential for the de novo synthesis of NAD. Also participates in cysteine desulfurization mediated by NFS2. Can activate the cysteine desulfurase activity of NFS2 in vitro. This Arabidopsis thaliana (Mouse-ear cress) protein is Quinolinate synthase, chloroplastic.